The primary structure comprises 334 residues: Glycerol-1-phosphate dehydrogenase [NAD(P)+] (334 aa).

Residues 77–81 and 99–102 each bind NAD(+); these read GKPID and TTAS. Asp104 provides a ligand contact to substrate. Ser108 provides a ligand contact to NAD(+). Asp147 is a binding site for substrate. Positions 147 and 225 each coordinate Zn(2+). His229 contacts substrate. Residue His246 participates in Zn(2+) binding.

It belongs to the glycerol-1-phosphate dehydrogenase family. The cofactor is Zn(2+).

The protein resides in the cytoplasm. The catalysed reaction is sn-glycerol 1-phosphate + NAD(+) = dihydroxyacetone phosphate + NADH + H(+). It carries out the reaction sn-glycerol 1-phosphate + NADP(+) = dihydroxyacetone phosphate + NADPH + H(+). The protein operates within membrane lipid metabolism; glycerophospholipid metabolism. In terms of biological role, catalyzes the NAD(P)H-dependent reduction of dihydroxyacetonephosphate (DHAP or glycerone phosphate) to glycerol 1-phosphate (G1P). The G1P thus generated is used as the glycerophosphate backbone of phospholipids in the cellular membranes of Archaea. The chain is Glycerol-1-phosphate dehydrogenase [NAD(P)+] from Methanococcus vannielii (strain ATCC 35089 / DSM 1224 / JCM 13029 / OCM 148 / SB).